Here is a 385-residue protein sequence, read N- to C-terminus: Transmembrane protein 271 (385 aa).

Transmembrane regions (helical) follow at residues 9–29 and 50–70; these read CAALSSCLLLACALSAAAVGL and GAFYSGLLLAAGLSLLGAALL. The disordered stretch occupies residues 83-111; that stretch reads EPGPGLGVPAAPAGAPEATPGESGAAAGA. Residues 121–141 form a helical membrane-spanning segment; that stretch reads LLLGVLVFMLGVLSAFAGAVI. Residues 160 to 203 form a disordered region; that stretch reads PRAPGSSPGSAPGSTPGSAPGSAPGSAPGSAPGAPRARSTLDSA. A compositionally biased stretch (low complexity) spans 163-197; that stretch reads PGSSPGSAPGSTPGSAPGSAPGSAPGSAPGAPRAR. A helical membrane pass occupies residues 219 to 239; the sequence is VLSTVFNSLECLLGLLSLLLV. Positions 245–305 are disordered; that stretch reads SQARRGRRGR…SEASILSPEE (61 aa). Positions 246–258 are enriched in basic residues; sequence QARRGRRGRRRGG. The segment covering 259–277 has biased composition (low complexity); the sequence is RALARPRGGSGLRAQPPAS. The segment covering 278-292 has biased composition (basic residues); that stretch reads RARRGRRGRRGRRLQ.

It localises to the membrane. The chain is Transmembrane protein 271 from Homo sapiens (Human).